Reading from the N-terminus, the 157-residue chain is 2-C-methyl-D-erythritol 2,4-cyclodiphosphate synthase (157 aa).

2 residues coordinate a divalent metal cation: aspartate 8 and histidine 10. Residues 8–10 and 34–35 each bind 4-CDP-2-C-methyl-D-erythritol 2-phosphate; these read DVH and HS. Position 42 (histidine 42) interacts with a divalent metal cation. Residues 56–58, 61–65, 132–135, phenylalanine 139, and arginine 142 contribute to the 4-CDP-2-C-methyl-D-erythritol 2-phosphate site; these read DIG, FPDTD, and TTTE.

This sequence belongs to the IspF family. In terms of assembly, homotrimer. Requires a divalent metal cation as cofactor.

It carries out the reaction 4-CDP-2-C-methyl-D-erythritol 2-phosphate = 2-C-methyl-D-erythritol 2,4-cyclic diphosphate + CMP. It functions in the pathway isoprenoid biosynthesis; isopentenyl diphosphate biosynthesis via DXP pathway; isopentenyl diphosphate from 1-deoxy-D-xylulose 5-phosphate: step 4/6. Involved in the biosynthesis of isopentenyl diphosphate (IPP) and dimethylallyl diphosphate (DMAPP), two major building blocks of isoprenoid compounds. Catalyzes the conversion of 4-diphosphocytidyl-2-C-methyl-D-erythritol 2-phosphate (CDP-ME2P) to 2-C-methyl-D-erythritol 2,4-cyclodiphosphate (ME-CPP) with a corresponding release of cytidine 5-monophosphate (CMP). In Geotalea uraniireducens (strain Rf4) (Geobacter uraniireducens), this protein is 2-C-methyl-D-erythritol 2,4-cyclodiphosphate synthase.